The sequence spans 169 residues: MKEMLLDKLKNCKKLVIMGIGNELKGDDAVGIYVVKKLMRYFGEEKEFINIKNLYLINAGTVPDFFTDILKEIKPTHILIIDCALMDKDVGEVKIIKEDEIINYSFSTHTLPLSIIVKYLKKFINAEIIILGIQPKIIDFCPISEEVKLSGDKLVNTLIEIIEELKLAK.

It belongs to the peptidase A31 family.

The protein is Putative hydrogenase maturation protease MJ0631 of Methanocaldococcus jannaschii (strain ATCC 43067 / DSM 2661 / JAL-1 / JCM 10045 / NBRC 100440) (Methanococcus jannaschii).